A 297-amino-acid chain; its full sequence is MDDLHGRNGRMHIGVAQNPMHVQYEDHGLHHIDNENSMMDDHADGGMDEGVETDIPSHPGNSADNRGEVVDRGIENGDQLTLSFQGQVYVFDRVSPEKVQAVLLLLGGREVPHTLPTTLGSPHQNNRVLGLSGTPQRLSVPQRLASLLRFREKRKGRNFDKTIRYTVRKEVALRMQRKKGQFTSAKSSNDDSGSTGSDWGSNQSWAVEGTETQKPEVLCRHCGTSEKSTPMMRRGPDGPRTLCNACGLMWANKGTLRDLSKVPPPQTPQHLSLNKNEDANLEADQMMEVTGDISNTQ.

The Tify domain maps to 73 to 108 (GIENGDQLTLSFQGQVYVFDRVSPEKVQAVLLLLGG). Residues 143–185 (RLASLLRFREKRKGRNFDKTIRYTVRKEVALRMQRKKGQFTSA) enclose the CCT domain. Residues 178–203 (KKGQFTSAKSSNDDSGSTGSDWGSNQ) form a disordered region. A compositionally biased stretch (low complexity) spans 190–201 (DDSGSTGSDWGS). A GATA-type zinc finger spans residues 213–269 (QKPEVLCRHCGTSEKSTPMMRRGPDGPRTLCNACGLMWANKGTLRDLSKVPPPQTPQ).

The protein belongs to the type IV zinc-finger family. Class C subfamily. Predominantly expressed in shoot apices, inflorescences and roots.

It is found in the nucleus. Its function is as follows. Transcriptional activator that specifically binds 5'-GATA-3' or 5'-GAT-3' motifs within gene promoters. The protein is GATA transcription factor 24 (GATA24) of Arabidopsis thaliana (Mouse-ear cress).